Here is a 123-residue protein sequence, read N- to C-terminus: Small ribosomal subunit protein uS12c (123 aa).

The segment at 9–31 (RNKRQAAENKTKSPALQRSPQRR) is disordered.

This sequence belongs to the universal ribosomal protein uS12 family. Part of the 30S ribosomal subunit.

The protein localises to the plastid. The protein resides in the chloroplast. Functionally, with S4 and S5 plays an important role in translational accuracy. Located at the interface of the 30S and 50S subunits. This chain is Small ribosomal subunit protein uS12c (rps12), found in Spirogyra maxima (Green alga).